A 362-amino-acid chain; its full sequence is Methylthioribose-1-phosphate isomerase (362 aa).

The active-site Proton donor is the Asp252.

The protein belongs to the eIF-2B alpha/beta/delta subunits family. MtnA subfamily.

The protein localises to the cytoplasm. It localises to the nucleus. The catalysed reaction is 5-(methylsulfanyl)-alpha-D-ribose 1-phosphate = 5-(methylsulfanyl)-D-ribulose 1-phosphate. It participates in amino-acid biosynthesis; L-methionine biosynthesis via salvage pathway; L-methionine from S-methyl-5-thio-alpha-D-ribose 1-phosphate: step 1/6. Functionally, catalyzes the interconversion of methylthioribose-1-phosphate (MTR-1-P) into methylthioribulose-1-phosphate (MTRu-1-P). This chain is Methylthioribose-1-phosphate isomerase, found in Drosophila pseudoobscura pseudoobscura (Fruit fly).